Reading from the N-terminus, the 316-residue chain is D-alanine--D-alanine ligase (316 aa).

Residues 104–303 (KRVWLQHGLP…YADLCVAILA (200 aa)) form the ATP-grasp domain. 130–185 (PDRLGLPLILKPPHEGSTVGITKVAGYSDMKAAYELAARFDAEVLAEQFITGRELT) is a binding site for ATP. Residues Asp-257, Glu-270, and Asn-272 each coordinate Mg(2+).

The protein belongs to the D-alanine--D-alanine ligase family. Mg(2+) is required as a cofactor. Requires Mn(2+) as cofactor.

Its subcellular location is the cytoplasm. It carries out the reaction 2 D-alanine + ATP = D-alanyl-D-alanine + ADP + phosphate + H(+). It functions in the pathway cell wall biogenesis; peptidoglycan biosynthesis. Functionally, cell wall formation. The sequence is that of D-alanine--D-alanine ligase from Bordetella bronchiseptica (strain ATCC BAA-588 / NCTC 13252 / RB50) (Alcaligenes bronchisepticus).